The chain runs to 342 residues: UDP-3-O-acylglucosamine N-acyltransferase (342 aa).

H253 functions as the Proton acceptor in the catalytic mechanism.

It belongs to the transferase hexapeptide repeat family. LpxD subfamily. As to quaternary structure, homotrimer.

The enzyme catalyses a UDP-3-O-[(3R)-3-hydroxyacyl]-alpha-D-glucosamine + a (3R)-hydroxyacyl-[ACP] = a UDP-2-N,3-O-bis[(3R)-3-hydroxyacyl]-alpha-D-glucosamine + holo-[ACP] + H(+). Its pathway is bacterial outer membrane biogenesis; LPS lipid A biosynthesis. Its function is as follows. Catalyzes the N-acylation of UDP-3-O-acylglucosamine using 3-hydroxyacyl-ACP as the acyl donor. Is involved in the biosynthesis of lipid A, a phosphorylated glycolipid that anchors the lipopolysaccharide to the outer membrane of the cell. The polypeptide is UDP-3-O-acylglucosamine N-acyltransferase (Rickettsia bellii (strain RML369-C)).